We begin with the raw amino-acid sequence, 106 residues long: Large ribosomal subunit protein uL23 (106 aa).

It belongs to the universal ribosomal protein uL23 family. In terms of assembly, part of the 50S ribosomal subunit. Contacts protein L29, and trigger factor when it is bound to the ribosome.

Its function is as follows. One of the early assembly proteins it binds 23S rRNA. One of the proteins that surrounds the polypeptide exit tunnel on the outside of the ribosome. Forms the main docking site for trigger factor binding to the ribosome. The polypeptide is Large ribosomal subunit protein uL23 (Acinetobacter baylyi (strain ATCC 33305 / BD413 / ADP1)).